A 359-amino-acid chain; its full sequence is MFAKLENLEQKFIEIECSLAQPNIFNDQEQYRKLTKTHSDLKPIVTTFQQFKKLQQQLSENKELISDIDPDIQEMALEEIKKLELELTHLEYELKILLLPKDPLDEKNILLEIRAGTGGEEAALFAADLFRMYCRYAEKMHWKVEIMSQSDSDTGGFKEIIALIQGDNVYSRLKFESGTHRVQRVPTTESQGRIHTSAATVAVLPEAEDVDIEIRPEELRFDVFRSSGPGGQSVNTTDSAVRVTHIPTGIVVTCQDEKSQHKNKAKALKVLSSRLLQIKQEQQEIEQADARRALVGSGDRSERIRTYNFPQGRVTDHRINLTLYSLIKVMEGEIQEFIDALSTHAQTEALKMQATQIAS.

Gln-232 bears the N5-methylglutamine mark.

This sequence belongs to the prokaryotic/mitochondrial release factor family. In terms of processing, methylated by PrmC. Methylation increases the termination efficiency of RF1.

Its subcellular location is the cytoplasm. Peptide chain release factor 1 directs the termination of translation in response to the peptide chain termination codons UAG and UAA. In Lawsonia intracellularis (strain PHE/MN1-00), this protein is Peptide chain release factor 1.